Consider the following 321-residue polypeptide: NADH-ubiquinone oxidoreductase chain 1 (321 aa).

Transmembrane regions (helical) follow at residues 9–29, 75–95, 106–126, 151–171, 177–197, 219–239, 256–276, and 297–317; these read ITNS…LTLL, ILFT…WAPM, LGLL…LWSG, TLGL…LMLF, HMWL…STLA, VEFS…NILF, PQLF…LFLW, and YLPL…ALCG.

The protein belongs to the complex I subunit 1 family.

It localises to the mitochondrion inner membrane. It catalyses the reaction a ubiquinone + NADH + 5 H(+)(in) = a ubiquinol + NAD(+) + 4 H(+)(out). Functionally, core subunit of the mitochondrial membrane respiratory chain NADH dehydrogenase (Complex I) that is believed to belong to the minimal assembly required for catalysis. Complex I functions in the transfer of electrons from NADH to the respiratory chain. The immediate electron acceptor for the enzyme is believed to be ubiquinone. This Lycodon semicarinatus (Ryukyu odd-tooth snake) protein is NADH-ubiquinone oxidoreductase chain 1 (MT-ND1).